The sequence spans 467 residues: UBX domain-containing protein 7 (467 aa).

Residue alanine 2 is modified to N-acetylalanine. Residues 2 to 54 (AAHGGSAASSALKGLIQQFTAITGASESVGKHMLEACNNNLEMAVTMFLDGGG) enclose the UBA domain. The tract at residues 57–77 (EEPSTSSASVSTVRPHTEEEV) is disordered. Positions 59 to 70 (PSTSSASVSTVR) are enriched in polar residues. Glycyl lysine isopeptide (Lys-Gly) (interchain with G-Cter in SUMO2) cross-links involve residues lysine 84 and lysine 112. The segment at 240 to 260 (GQLDGLSSSPPKKCARSESLI) is disordered. Phosphoserine occurs at positions 256, 258, 263, and 266. A ubiquitin-interacting motif (UIM) repeat occupies 263-282 (SEDSQLEAAIRASLQETHFD). The disordered stretch occupies residues 281 to 364 (FDSAQAKQDS…TATNHQGLPS (84 aa)). Residues 330-344 (HKDLGHRKEENRRPL) show a composition bias toward basic and acidic residues. The residue at position 373 (serine 373) is a Phosphoserine. In terms of domain architecture, UBX spans 386-463 (VNGPKAQLML…GLCPQETVFV (78 aa)).

In terms of assembly, interacts with neddylated CUL2, ubiquitinated HIF1A, and VCP/p97.

The protein resides in the nucleus. Functionally, ubiquitin-binding adapter that links a subset of NEDD8-associated cullin ring ligases (CRLs) to the segregase VCP/p97, to regulate turnover of their ubiquitination substrates. This Mus musculus (Mouse) protein is UBX domain-containing protein 7 (Ubxn7).